A 326-amino-acid polypeptide reads, in one-letter code: Homocysteine S-methyltransferase 1 (326 aa).

Positions 9-323 constitute a Hcy-binding domain; sequence LLEDLIEKCG…STIKAISRDL (315 aa). Zn(2+) is bound by residues cysteine 241, cysteine 308, and cysteine 309.

Requires Zn(2+) as cofactor. As to expression, expressed in roots, young leaves, florets and flowers. Not detected in old leaves.

It carries out the reaction S-methyl-L-methionine + L-homocysteine = 2 L-methionine + H(+). Inhibited by L-methionine. Functionally, catalyzes methyl transfer from S-methylmethionine to homocysteine. The highest preference is for DL-homocysteine &gt;&gt; DL-cysteine. Has no selenocysteine methyltransferase activity. The protein is Homocysteine S-methyltransferase 1 (HMT1) of Brassica oleracea var. italica (Broccoli).